The sequence spans 350 residues: ATP-dependent (S)-NAD(P)H-hydrate dehydratase (350 aa).

In terms of domain architecture, YjeF C-terminal spans Leu-35–Leu-342. Residues Gly-139 and Asn-192–Arg-198 each bind (6S)-NADPHX. ATP is bound by residues Lys-230–Asp-234 and Gly-249–Gly-258. Residue Asp-259 coordinates (6S)-NADPHX.

This sequence belongs to the NnrD/CARKD family. It depends on Mg(2+) as a cofactor.

The protein resides in the cytoplasm. It catalyses the reaction (6S)-NADHX + ATP = ADP + phosphate + NADH + H(+). It carries out the reaction (6S)-NADPHX + ATP = ADP + phosphate + NADPH + H(+). Its function is as follows. Catalyzes the dehydration of the S-form of NAD(P)HX at the expense of ATP, which is converted to ADP. Together with NAD(P)HX epimerase, which catalyzes the epimerization of the S- and R-forms, the enzyme allows the repair of both epimers of NAD(P)HX, a damaged form of NAD(P)H that is a result of enzymatic or heat-dependent hydration. The polypeptide is ATP-dependent (S)-NAD(P)H-hydrate dehydratase (Mycosarcoma maydis (Corn smut fungus)).